We begin with the raw amino-acid sequence, 475 residues long: MSPKTETKASVGFKAGVKDYRLTYYTPEYQTKDTDILAAFRVTPQPGVPPEEAGAAVAAESSTGTWTTVWTDGLTSLDRYKGRCYDIEPVPGEENQYIVYVAYPLDLFEEGSVTNLFTSIVGNVFGFKALRALRLEDLRIPPAYSKTFQGPPHGIQVERDKLNKYGRPLLGCTIKPKLGLSAKNYGRAVYECLRGGLDFTKDDENVNSQPFMRWRDRFCFCAEALFKAQAETGEIKGHYLNATAGTCEEMMKRAVFARELGVPIVMHDYLTGGFTANTSLAHYCRDNGLLLHIHRAMHAVIDRQKNHGMHFRVLAKALRMSGGDHIHAGTVVGKLEGEREVTLGFVDLLRDDFIEKDRSRGIYFTQDWVSMPGVIPVASGGIHVWHMPALTEIFGDDSVLQFGGGTLGHPWGNAPGAVANRVALEACVEARNEGRDLAREGNEVIREASKWSPELAAACEVWKEIIFEFETIDTL.

The propeptide occupies 1 to 2; sequence MS. Pro3 is modified (N-acetylproline). At Lys14 the chain carries N6,N6,N6-trimethyllysine. 2 residues coordinate substrate: Asn123 and Thr173. Lys175 functions as the Proton acceptor in the catalytic mechanism. Lys177 contacts substrate. 3 residues coordinate Mg(2+): Lys201, Asp203, and Glu204. The residue at position 201 (Lys201) is an N6-carboxylysine. His294 serves as the catalytic Proton acceptor. Substrate-binding residues include Arg295, His327, and Ser379.

Belongs to the RuBisCO large chain family. Type I subfamily. In terms of assembly, heterohexadecamer of 8 large chains and 8 small chains; disulfide-linked. The disulfide link is formed within the large subunit homodimers. The cofactor is Mg(2+). The disulfide bond which can form in the large chain dimeric partners within the hexadecamer appears to be associated with oxidative stress and protein turnover.

The protein localises to the plastid. It localises to the chloroplast. It catalyses the reaction 2 (2R)-3-phosphoglycerate + 2 H(+) = D-ribulose 1,5-bisphosphate + CO2 + H2O. The catalysed reaction is D-ribulose 1,5-bisphosphate + O2 = 2-phosphoglycolate + (2R)-3-phosphoglycerate + 2 H(+). Functionally, ruBisCO catalyzes two reactions: the carboxylation of D-ribulose 1,5-bisphosphate, the primary event in carbon dioxide fixation, as well as the oxidative fragmentation of the pentose substrate in the photorespiration process. Both reactions occur simultaneously and in competition at the same active site. This is Ribulose bisphosphate carboxylase large chain from Afrocarpus gracilior (African fern pine).